The chain runs to 148 residues: Deoxyuridine 5'-triphosphate nucleotidohydrolase (148 aa).

Substrate is bound by residues Arg67 to Gly69, Asn80, Leu84 to Asp86, and Met94.

The protein belongs to the dUTPase family. Requires Mg(2+) as cofactor.

The catalysed reaction is dUTP + H2O = dUMP + diphosphate + H(+). Its pathway is pyrimidine metabolism; dUMP biosynthesis; dUMP from dCTP (dUTP route): step 2/2. Functionally, this enzyme is involved in nucleotide metabolism: it produces dUMP, the immediate precursor of thymidine nucleotides and it decreases the intracellular concentration of dUTP so that uracil cannot be incorporated into DNA. The protein is Deoxyuridine 5'-triphosphate nucleotidohydrolase of Francisella tularensis subsp. tularensis (strain FSC 198).